Here is a 319-residue protein sequence, read N- to C-terminus: tRNA uridine(34) hydroxylase (319 aa).

Residues 127–221 (KQEDTVIIDA…YGKDPEVQGE (95 aa)) form the Rhodanese domain. Catalysis depends on C181, which acts as the Cysteine persulfide intermediate.

Belongs to the TrhO family.

It carries out the reaction uridine(34) in tRNA + AH2 + O2 = 5-hydroxyuridine(34) in tRNA + A + H2O. In terms of biological role, catalyzes oxygen-dependent 5-hydroxyuridine (ho5U) modification at position 34 in tRNAs. This chain is tRNA uridine(34) hydroxylase, found in Bacillus cereus (strain B4264).